The chain runs to 397 residues: 2-isopropylmalate synthase 1 (397 aa).

The Pyruvate carboxyltransferase domain occupies 6–268 (VIVFDTTLRD…VHGINTKEIY (263 aa)). 4 residues coordinate Mn(2+): aspartate 15, histidine 203, histidine 205, and asparagine 239.

It belongs to the alpha-IPM synthase/homocitrate synthase family. LeuA type 1 subfamily. Homodimer. The cofactor is Mn(2+).

Its subcellular location is the cytoplasm. The catalysed reaction is 3-methyl-2-oxobutanoate + acetyl-CoA + H2O = (2S)-2-isopropylmalate + CoA + H(+). The protein operates within amino-acid biosynthesis; L-leucine biosynthesis; L-leucine from 3-methyl-2-oxobutanoate: step 1/4. Catalyzes the condensation of the acetyl group of acetyl-CoA with 3-methyl-2-oxobutanoate (2-ketoisovalerate) to form 3-carboxy-3-hydroxy-4-methylpentanoate (2-isopropylmalate). This chain is 2-isopropylmalate synthase 1, found in Caldanaerobacter subterraneus subsp. tengcongensis (strain DSM 15242 / JCM 11007 / NBRC 100824 / MB4) (Thermoanaerobacter tengcongensis).